Here is a 355-residue protein sequence, read N- to C-terminus: uncharacterized protein (355 aa).

The tract at residues 1–61 (MNKKIEKNNN…PKRRGRRPKK (61 aa)) is disordered. Residues 18 to 37 (YESNTTDNQLIMKKNANSGS) show a composition bias toward polar residues.

This is an uncharacterized protein from Acanthamoeba polyphaga mimivirus (APMV).